The chain runs to 350 residues: Hydroxymethylglutaryl-CoA synthase (350 aa).

Glu83 functions as the Proton donor/acceptor in the catalytic mechanism. The active-site Acyl-thioester intermediate is the Cys115. Positions 115 and 156 each coordinate (3S)-3-hydroxy-3-methylglutaryl-CoA. Arg204 is a binding site for CoA. The (3S)-3-hydroxy-3-methylglutaryl-CoA site is built by Thr206 and His239. The Proton donor/acceptor role is filled by His239. Lys244 is a binding site for CoA. Asn271 and Ser301 together coordinate (3S)-3-hydroxy-3-methylglutaryl-CoA.

The protein belongs to the thiolase-like superfamily. Archaeal HMG-CoA synthase family. In terms of assembly, interacts with acetoacetyl-CoA thiolase that catalyzes the precedent step in the pathway and with a DUF35 protein. The acetoacetyl-CoA thiolase/HMG-CoA synthase complex channels the intermediate via a fused CoA-binding site, which allows for efficient coupling of the endergonic thiolase reaction with the exergonic HMGCS reaction.

The catalysed reaction is acetoacetyl-CoA + acetyl-CoA + H2O = (3S)-3-hydroxy-3-methylglutaryl-CoA + CoA + H(+). Its pathway is metabolic intermediate biosynthesis; (R)-mevalonate biosynthesis; (R)-mevalonate from acetyl-CoA: step 2/3. Its function is as follows. Catalyzes the condensation of acetyl-CoA with acetoacetyl-CoA to form 3-hydroxy-3-methylglutaryl-CoA (HMG-CoA). Functions in the mevalonate (MVA) pathway leading to isopentenyl diphosphate (IPP), a key precursor for the biosynthesis of isoprenoid compounds that are building blocks of archaeal membrane lipids. This Thermococcus onnurineus (strain NA1) protein is Hydroxymethylglutaryl-CoA synthase.